The primary structure comprises 116 residues: Somatostatin (116 aa).

The N-terminal stretch at 1-24 (MLSCRLQCALAALSIVLALGGVTG) is a signal peptide. Residues 25 to 88 (APSDPRLRQF…QDEMRLELQR (64 aa)) constitute a propeptide that is removed on maturation. Alanine 43 carries the post-translational modification Alanine amide. The interval 62–99 (QTENDALEPEDLSQAAEQDEMRLELQRSANSNPAMAPR) is disordered. A disulfide bridge connects residues cysteine 105 and cysteine 116.

It belongs to the somatostatin family. In terms of processing, C-terminal amidation of the neuronostatin peptide is required for its biological activity, including for the regulation of mean arterial pressure. Expressed in the pancreas and the spleen (at protein level).

It is found in the secreted. In terms of biological role, inhibits the secretion of pituitary hormones, including that of growth hormone/somatotropin (GH1), PRL, ACTH, luteinizing hormone (LH) and TSH. Also impairs ghrelin- and GnRH-stimulated secretion of GH1 and LH; the inhibition of ghrelin-stimulated secretion of GH1 can be further increased by neuronostatin. May enhance low-glucose-induced glucagon release by pancreatic alpha cells. This effect may be mediated by binding to GPR107 and PKA activation. May regulate cardiac contractile function. May compromise cardiomyocyte viability. In the central nervous system, may impair memory retention and may affect hippocampal excitability. May also have anxiolytic and anorexigenic effects. May play a role in arterial pressure regulation. May inhibit basal, but not ghrelin- or GnRH-stimulated secretion of GH1 or LH, but does not affect the release of other pituitary hormones, including PRL, ACTH, FSH or TSH. Potentiates inhibitory action of somatostatin on ghrelin-stimulated secretion of GH1, but not that on GnRH-stimulated secretion of LH. This Sus scrofa (Pig) protein is Somatostatin (SST).